We begin with the raw amino-acid sequence, 1413 residues long: MKALLDLFKQVSQDEQFDAIKIGLASPEKIRSWSYGEVRKPETINYRTFKPERDGLFCAKIFGPIKDYECLCGKYKRLKHRGVICEKCGVEVTVAKVRRERMGHIELASPVAHIWFLKSLPSRLGMVLDMTLRDIERVLYFEAWCVIEPGMTPLKRGQIMSDDDFLAKTEEYGDDFRALMGAEAVRELLRTIDIDREVETLRGELKATSSEAKIKKISKRLKVLEGFQKSGIKPDWMVMEVLPVLPPDLRPLVPLDGGRFATSDLNDLYRRVINRNNRLKRLLELKAPEIILRNEKRMLQEAVDSLLDNGRRGKAMTGANKRQLKSLADMIKGKSGRFRQNLLGKRVDYSGRSVIVVGPQLKLHQCGLPKLMALELFKPFIFNRLEMMGLATTIKAAKKLVESQEPVVWDILEEVIREHPVMLNRAPTLHRLGIQAFEPVLIEGKAIQLHPLVCAAFNADFDGDQMAVHVPLSLEAQLEARTLMLASNNVLFPANGEPSIVPSQDIVLGLYYTTRERINGRGEGIFFADVAEVQRAYDNGEVELQTRITVRLKEHERDEQGEWQPVIRRHETTVGRALLSEILPRGLPFTVLNKALKKKEISRLINQSFRRCGLRDTVIFADKLMQSGFRLATRGGISIAMEDMLIPAAKEVILAEAGREVKEIDKQYSSGLVTSQERYNNVVDIWGKAGDKVGKAMMEQLATEPVVNRHGENVRQESFNSIYMMADSGARGSAAQIRQLAGMRGLMAKPDGSIIETPITANFREGLNVLQYFISTHGARKGLADTALKTANSGYLTRRLVDVTQDLVITEVDCGTSHGYSMKALVEGGEVIEPLRDRILGRVAAVDIVNPDTQETEITAGTLLDEDLVDLIDRVGVDEVKVRTPLTCETRHGLCAHCYGRDLGRGSHVNVGEAVGVIAAQSIGEPGTQLTMRTFHIGGAASRSALASAVETKSNGTVGFASTMRYVTNAKGERVAISRSGELAIYDDNGRERERHKIPYGATVLVGDGDAVKAGTRLATWDPLTRPIVSEYGGAVRFENIEEGVTVAKQVDEVTGLSTLVVITPKTRGGKVVMRPQIKLVNDNGEDVRIAGTDHAVNISFPVGALITVRDGQQVAVGEVLARIPQESQKTRDITGGLPRVAELFEARSPKDAGMLAEVTGTVSFGKDTKGKQRLVITDLEGISHEFLIPKEKQVLVHDGQVVNKGEMIVDGPADPHDILRLQGIEKLATYIVDEVQDVYRLQGVKINDKHIEVIVRQMLRRVNITDPGDADFIPGEQVERSELLNENDRVIAEDKRPAQYDNVLLGITKASLSTDSFISAASFQETTRVLTEAAIMGKRDDLRGLKENVIVGRLIPAGTGLAYHLARKDKEALEAAEREAARQQANPFEEMPVAADIEVDVSLPFEGETPAE.

Zn(2+)-binding residues include cysteine 70, cysteine 72, cysteine 85, and cysteine 88. Mg(2+) contacts are provided by aspartate 460, aspartate 462, and aspartate 464. Positions 814, 888, 895, and 898 each coordinate Zn(2+).

The protein belongs to the RNA polymerase beta' chain family. In terms of assembly, the RNAP catalytic core consists of 2 alpha, 1 beta, 1 beta' and 1 omega subunit. When a sigma factor is associated with the core the holoenzyme is formed, which can initiate transcription. The cofactor is Mg(2+). Zn(2+) is required as a cofactor.

The enzyme catalyses RNA(n) + a ribonucleoside 5'-triphosphate = RNA(n+1) + diphosphate. DNA-dependent RNA polymerase catalyzes the transcription of DNA into RNA using the four ribonucleoside triphosphates as substrates. The sequence is that of DNA-directed RNA polymerase subunit beta' from Bordetella avium (strain 197N).